The primary structure comprises 338 residues: Anthranilate phosphoribosyltransferase (338 aa).

5-phospho-alpha-D-ribose 1-diphosphate contacts are provided by residues Gly80, 83 to 84 (GD), Thr88, 90 to 93 (NIST), 108 to 116 (KHGNRAVSS), and Ser120. Anthranilate is bound at residue Gly80. Mg(2+) is bound at residue Ser92. Asn111 contacts anthranilate. Anthranilate is bound at residue Arg166. Residues Asp225 and Glu226 each coordinate Mg(2+).

Belongs to the anthranilate phosphoribosyltransferase family. As to quaternary structure, homodimer. The cofactor is Mg(2+).

It catalyses the reaction N-(5-phospho-beta-D-ribosyl)anthranilate + diphosphate = 5-phospho-alpha-D-ribose 1-diphosphate + anthranilate. The protein operates within amino-acid biosynthesis; L-tryptophan biosynthesis; L-tryptophan from chorismate: step 2/5. Functionally, catalyzes the transfer of the phosphoribosyl group of 5-phosphorylribose-1-pyrophosphate (PRPP) to anthranilate to yield N-(5'-phosphoribosyl)-anthranilate (PRA). The sequence is that of Anthranilate phosphoribosyltransferase from Thermoanaerobacter sp. (strain X514).